We begin with the raw amino-acid sequence, 468 residues long: UDP-N-acetylmuramate--L-alanine ligase (468 aa).

ATP is bound at residue 112–118 (GTHGKTT).

The protein belongs to the MurCDEF family.

It is found in the cytoplasm. The enzyme catalyses UDP-N-acetyl-alpha-D-muramate + L-alanine + ATP = UDP-N-acetyl-alpha-D-muramoyl-L-alanine + ADP + phosphate + H(+). The protein operates within cell wall biogenesis; peptidoglycan biosynthesis. Functionally, cell wall formation. The polypeptide is UDP-N-acetylmuramate--L-alanine ligase (Bordetella bronchiseptica (strain ATCC BAA-588 / NCTC 13252 / RB50) (Alcaligenes bronchisepticus)).